A 299-amino-acid chain; its full sequence is MDLSELERDNTGRCRLSSPVPPVCLKEPCVLGVDEAGRGPVLGPMVYAICYCPLSRLEDLEALKVADSKTLSESERDRLFAKMEEDGDFVGWALDVLSPNLISTSMLGRVKYNLNALSHDTATGLVQFALDQGVNVAQVFVDTVGLPETYQERLQQRFPGIEVTVKAKADALYPVVSAASICAKVARDQAVKNWKFVEKLQDLDTDYGSGYPNDPKTKAWLRKHVDPVFGFPQFVRFSWRTAQSILESEAEDVKWEDSETGDPKGPGKIKSYFSESPQTCLRLPHRYFQERGLESATVL.

Residue methionine 1 is modified to N-acetylmethionine. The RNase H type-2 domain occupies 28–251 (PCVLGVDEAG…AQSILESEAE (224 aa)). A divalent metal cation is bound by residues aspartate 34, glutamate 35, and aspartate 142. Threonine 205 and threonine 217 each carry phosphothreonine. The interval 250-272 (AEDVKWEDSETGDPKGPGKIKSY) is disordered. Serine 258 is modified (phosphoserine).

This sequence belongs to the RNase HII family. Eukaryotic subfamily. As to quaternary structure, the RNase H2 complex is a heterotrimer composed of the catalytic subunit RNASEH2A and the non-catalytic subunits RNASEH2B and RNASEH2C. Requires Mn(2+) as cofactor. The cofactor is Mg(2+).

Its subcellular location is the nucleus. It carries out the reaction Endonucleolytic cleavage to 5'-phosphomonoester.. Functionally, catalytic subunit of RNase HII, an endonuclease that specifically degrades the RNA of RNA:DNA hybrids. Participates in DNA replication, possibly by mediating the removal of lagging-strand Okazaki fragment RNA primers during DNA replication. Mediates the excision of single ribonucleotides from DNA:RNA duplexes. The protein is Ribonuclease H2 subunit A (RNASEH2A) of Bos taurus (Bovine).